Consider the following 335-residue polypeptide: Probable E3 ubiquitin-protein ligase BAH1-like (335 aa).

The SPX domain occupies 1-163 (MKFGETFTEY…SSENGKNFKL (163 aa)). An RING-type zinc finger spans residues 231-280 (CAICLETVFNPYALKCGHIFCNSCACSAASVLIFQGIKAAPRHSKCPICR).

It belongs to the RING-type zinc finger family.

The catalysed reaction is S-ubiquitinyl-[E2 ubiquitin-conjugating enzyme]-L-cysteine + [acceptor protein]-L-lysine = [E2 ubiquitin-conjugating enzyme]-L-cysteine + N(6)-ubiquitinyl-[acceptor protein]-L-lysine.. It functions in the pathway protein modification; protein ubiquitination. This chain is Probable E3 ubiquitin-protein ligase BAH1-like (RF178), found in Arabidopsis thaliana (Mouse-ear cress).